The chain runs to 2058 residues: Unconventional myosin-X (2058 aa).

Position 1 is an N-acetylmethionine (Met-1). One can recognise a Myosin motor domain in the interval 63–739 (EGVDDMASLT…LEQKLEKRRE (677 aa)). ATP contacts are provided by residues Asn-104, Tyr-113, 160-165 (GAGKTE), and Asn-215. The interval 619-641 (LHSLMATLSSSNPFFVRCIKPNM) is actin-binding. 3 IQ domains span residues 742 to 763 (VSHA…KQYR), 764 to 787 (KVLY…RFLH), and 788 to 817 (LKKA…EKRE). Positions 814 to 883 (EKREQEEKKK…LTRELEKQKE (70 aa)) are SAH. Disordered regions lie at residues 819-840 (EEKK…RERE) and 847-866 (ELRA…EALQ). Positions 847–861 (ELRAQQEEETRKQQE) are enriched in basic and acidic residues. Residues 884 to 934 (NKQVEEILRLEKEIEDLQRMKEQQELSLTEASLQKLQERRDQELRRLEEEA) adopt a coiled-coil conformation. 3 positions are modified to phosphoserine: Ser-962, Ser-965, and Ser-968. Residues 964–1090 (GSEFSSELAE…DLPSPDGDYD (127 aa)) form a disordered region. Positions 989 to 1003 (PEEEVDEGFEADDDA) are enriched in acidic residues. A compositionally biased stretch (polar residues) spans 1040 to 1049 (VVPTSPSADS). A compositionally biased stretch (low complexity) spans 1060–1071 (SGSLHNSSSGES). Position 1158 is a phosphothreonine (Thr-1158). PH domains lie at 1212–1310 (EALK…QVHA) and 1392–1497 (EFIV…NVTD). The MyTH4 domain occupies 1547–1695 (LPYGDINLNL…PSRDEIEALI (149 aa)). The 345-residue stretch at 1700-2044 (MTSTVYCHGG…AYISMIVKKR (345 aa)) folds into the FERM domain.

The protein belongs to the TRAFAC class myosin-kinesin ATPase superfamily. Myosin family. As to quaternary structure, monomer, when in an inactive conformation in the cytosol. Homodimer in its active, membrane-bound conformation; antiparallel coiled coil-mediated dimer formation. Interacts strongly with CALM3 and weakly with CALM, the CALM3 interaction is essential for function in filopodial extension and motility. Interacts with ECPAS. Interacts with NEO1. Interacts with ITGB1 and ITGB3. Interacts with VASP. Interacts with DCC and ITGB5; the presence of DCC inhibits ITGB5 binding. Interacts with tubulin; ITGB5 or DCC binding inhibits tubulin binding. Post-translationally, the initiator methionine for isoform Headless is removed. Ubiquitous.

The protein resides in the cytoplasm. The protein localises to the cytosol. It is found in the cell projection. It localises to the lamellipodium. Its subcellular location is the ruffle. The protein resides in the cytoskeleton. The protein localises to the filopodium tip. It is found in the cell cortex. It localises to the filopodium membrane. Its function is as follows. Myosins are actin-based motor molecules with ATPase activity. Unconventional myosins serve in intracellular movements. MYO10 binds to actin filaments and actin bundles and functions as a plus end-directed motor. Moves with higher velocity and takes larger steps on actin bundles than on single actin filaments. The tail domain binds to membranous compartments containing phosphatidylinositol 3,4,5-trisphosphate or integrins, and mediates cargo transport along actin filaments. Regulates cell shape, cell spreading and cell adhesion. Stimulates the formation and elongation of filopodia. In hippocampal neurons it induces the formation of dendritic filopodia by trafficking the actin-remodeling protein VASP to the tips of filopodia, where it promotes actin elongation. Plays a role in formation of the podosome belt in osteoclasts. Functionally, functions as a dominant-negative regulator of isoform 1, suppressing its filopodia-inducing and axon outgrowth-promoting activities. In hippocampal neurons, it increases VASP retention in spine heads to induce spine formation and spine head expansion. The sequence is that of Unconventional myosin-X (MYO10) from Homo sapiens (Human).